We begin with the raw amino-acid sequence, 264 residues long: Small ribosomal subunit protein uS2 (264 aa).

The segment at 228–264 is disordered; sequence HEDVSAGPVEEQSDEAQAAEQGTEGDTAQLTSSQGRS. Over residues 251–264 the composition is skewed to polar residues; the sequence is EGDTAQLTSSQGRS.

It belongs to the universal ribosomal protein uS2 family.

This is Small ribosomal subunit protein uS2 from Deinococcus radiodurans (strain ATCC 13939 / DSM 20539 / JCM 16871 / CCUG 27074 / LMG 4051 / NBRC 15346 / NCIMB 9279 / VKM B-1422 / R1).